The primary structure comprises 278 residues: Energy-coupling factor transporter ATP-binding protein EcfA (278 aa).

The ABC transporter domain occupies 4-239 (LETRDLKYSY…SETVRSANLR (236 aa)). 37 to 44 (GPNGAGKS) is a binding site for ATP.

The protein belongs to the ABC transporter superfamily. Energy-coupling factor EcfA family. As to quaternary structure, forms a stable energy-coupling factor (ECF) transporter complex composed of 2 membrane-embedded substrate-binding proteins (S component), 2 ATP-binding proteins (A component) and 2 transmembrane proteins (T component).

It is found in the cell membrane. Its function is as follows. ATP-binding (A) component of a common energy-coupling factor (ECF) ABC-transporter complex. Unlike classic ABC transporters this ECF transporter provides the energy necessary to transport a number of different substrates. The protein is Energy-coupling factor transporter ATP-binding protein EcfA of Methanococcus maripaludis (strain DSM 14266 / JCM 13030 / NBRC 101832 / S2 / LL).